The following is a 93-amino-acid chain: uncharacterized protein (93 aa).

The next 3 membrane-spanning stretches (helical) occupy residues 15 to 35 (MAGLRVLSSMIELTAAIVMLV), 48 to 68 (ILAIVGPLIFIITMTVGIYQI), and 72 to 92 (LSYAKLILIFTGVVLILAGVH).

The protein localises to the cell membrane. This is an uncharacterized protein from Bacillus subtilis (strain 168).